Consider the following 317-residue polypeptide: Ribosomal RNA small subunit methyltransferase H (317 aa).

Residues 39 to 41, Asp-59, Phe-83, Asp-104, and Gln-111 contribute to the S-adenosyl-L-methionine site; that span reads GGH.

This sequence belongs to the methyltransferase superfamily. RsmH family.

The protein localises to the cytoplasm. The enzyme catalyses cytidine(1402) in 16S rRNA + S-adenosyl-L-methionine = N(4)-methylcytidine(1402) in 16S rRNA + S-adenosyl-L-homocysteine + H(+). Specifically methylates the N4 position of cytidine in position 1402 (C1402) of 16S rRNA. The chain is Ribosomal RNA small subunit methyltransferase H from Paraburkholderia phymatum (strain DSM 17167 / CIP 108236 / LMG 21445 / STM815) (Burkholderia phymatum).